Here is a 114-residue protein sequence, read N- to C-terminus: Non-specific lipid-transfer protein 2 (114 aa).

Residues Met1–Glu23 form the signal peptide. Intrachain disulfides connect Cys27/Cys73, Cys37/Cys50, Cys51/Cys96, and Cys71/Cys110.

It belongs to the plant LTP family.

In terms of biological role, plant non-specific lipid-transfer proteins transfer phospholipids as well as galactolipids across membranes. May play a role in wax or cutin deposition in the cell walls of expanding epidermal cells and certain secretory tissues. This Solanum lycopersicum (Tomato) protein is Non-specific lipid-transfer protein 2 (LE16).